The chain runs to 104 residues: Protamine-2 (104 aa).

The tract at residues 1-91 is disordered; the sequence is MVRYRMRSPS…RRGCRRSRRR (91 aa). A phosphoserine mark is found at Ser-8, Ser-10, and Ser-33. Basic and acidic residues predominate over residues 33 to 44; the sequence is SPERVEDYGRTE. The segment covering 45–91 has biased composition (basic residues); the sequence is RGHHHRHRRCKRLHRIHKRRRSCRRRRRHSCRHRRRHRRGCRRSRRR.

This sequence belongs to the protamine P2 family. In terms of assembly, interacts with TDRP. Proteolytic processing into mature chains is required for histone eviction during spermatogenesis. Transition proteins (TNP1 and TNP2) are required for processing. In terms of tissue distribution, testis.

It localises to the nucleus. Its subcellular location is the chromosome. Functionally, protamines substitute for histones in the chromatin of sperm during the haploid phase of spermatogenesis. They compact sperm DNA into a highly condensed, stable and inactive complex. The protein is Protamine-2 (Prm2) of Rattus norvegicus (Rat).